Here is a 509-residue protein sequence, read N- to C-terminus: NADH dehydrogenase (509 aa).

Residues 1-183 (MVLDANIKAQ…YLNGESFGSG (183 aa)) are membrane-binding. The catalytic stretch occupies residues 184–509 (RMTLEEILAK…LGAFDYLIRN (326 aa)). 210-241 (DVLVVGGGPAGASAAIYTARKGIRTGVVAERF) lines the FAD pocket. Cysteine 337 and cysteine 340 are joined by a disulfide. 349 to 379 (DVAVIGGGNSGIEAAIDLAGIVNHVTVLEFA) provides a ligand contact to NAD(+). 469 to 479 (TSVPGLFAAGD) provides a ligand contact to FAD.

Belongs to the class-II pyridine nucleotide-disulfide oxidoreductase family. In terms of assembly, homodimer. FAD serves as cofactor.

It is found in the cell membrane. The catalysed reaction is a ubiquinone + NADH + 5 H(+)(in) = a ubiquinol + NAD(+) + 4 H(+)(out). Its function is as follows. Transfer of electrons from NADH to the respiratory chain. The immediate electron acceptor for the enzyme is believed to be ubiquinone. The protein is NADH dehydrogenase (ahpF) of Bacillus subtilis (strain 168).